A 716-amino-acid polypeptide reads, in one-letter code: Hepatocyte growth factor-like protein (716 aa).

The N-terminal stretch at 1-18 (MGWLPLLLLLVQCSRALG) is a signal peptide. The region spanning 19–105 (QRSPLNDFQL…SLCHLFQKKD (87 aa)) is the PAN domain. Disulfide bonds link C56–C78, C60–C66, C110–C186, C131–C169, C157–C181, C191–C268, C194–C333, C212–C251, C240–C263, C292–C370, C313–C352, C341–C364, C379–C457, C400–C440, C428–C452, C477–C593, C512–C528, C607–C672, C637–C651, and C662–C690. A glycan (N-linked (GlcNAc...) asparagine) is linked at N72. 4 consecutive Kringle domains span residues 110 to 186 (CIMD…IKTC), 191 to 268 (CVLC…LPSC), 292 to 370 (CFRG…IPRC), and 379 to 457 (CYHG…LQRC). An N-linked (GlcNAc...) asparagine glycan is attached at N173. A glycan (N-linked (GlcNAc...) asparagine) is linked at N305. A Peptidase S1 domain is found at 489 to 714 (VVGGHPGNSP…FVDWINKVMQ (226 aa)). A glycan (N-linked (GlcNAc...) asparagine) is linked at N620.

This sequence belongs to the peptidase S1 family. Plasminogen subfamily. Dimer of an alpha chain and a beta chain linked by a disulfide bond. Interacts (via beta chain) with MST1R (via SEMA domain). In terms of processing, cleaved after Arg-488, probably by HPN/Hepsin, to yield the active form consisting of two disulfide-linked chains. Liver. Lower levels in lung, placenta and adrenal.

It localises to the secreted. The sequence is that of Hepatocyte growth factor-like protein (Mst1) from Mus musculus (Mouse).